A 349-amino-acid polypeptide reads, in one-letter code: MPSNPKRFQIAAKNYFLTYPNCSLSKEEALDQLQRLQTPTNKKYIKVARELHENGEPHLHVLIQFEGKFNCKNQRFFDLVSPTRSTHFHPNIQGAKSSSDVNSYVDKDGDTIEWGEFQIDARSARGGQQTANDECAEALNRSSKEEALQIIKEKLPKDFLFCYHNLVSNLDRIFTPAPTPFVPPFQLSSFTNVPEDMQEWADDYFGVSAAARPMRYKSIIIEGESRTGKTMWARSLGPHNYLSGHLDFNSRVYSNSALYNVIDDVTPHYLKLKHWKELIGAQRDWQSNCKYGKPVQIKGGIPSIVLCNPGGDTSFQDFLDKEENEALKDWTLYNAVFIKLTEPLYDGTV.

Positions 9 to 117 constitute a CRESS-DNA virus Rep endonuclease domain; it reads QIAAKNYFLT…DGDTIEWGEF (109 aa). An RCR-1 motif is present at residues 16–19; that stretch reads FLTY. A divalent metal cation is bound by residues Glu-50, His-58, and His-60. Residues 58-60 carry the RCR-2 motif; it reads HLH. Tyr-104 acts as the For DNA cleavage activity in catalysis. An RCR-3 motif is present at residues 104-107; that stretch reads YVDK. An a divalent metal cation-binding site is contributed by Asp-108. Residues 144–154 are binding to RBR1; it reads KEEALQIIKEK. An oligomerization region spans residues 157–177; it reads KDFLFCYHNLVSNLDRIFTPA. Residue 223–230 coordinates ATP; it reads GESRTGKT.

The protein belongs to the geminiviridae Rep protein family. In terms of assembly, homooligomer. Interacts with the replication enhancer protein (REn). Interacts with host retinoblastoma-related protein 1 (RBR1), and may thereby induce the transcription of host replicative enzymes even if the cell is not dividing anymore. Interacts with host PCNA. Interacts with host SCE1 protein. It depends on Mg(2+) as a cofactor. Mn(2+) is required as a cofactor.

It localises to the host nucleus. In terms of biological role, essential for the replication of viral ssDNA. The closed circular ssDNA genome is first converted to a superhelical dsDNA. Rep binds a specific region at the genome origin of replication. It introduces an endonucleolytic nick within the conserved sequence 5'-TAATATTAC-3' in the intergenic region of the genome present in all geminiviruses, thereby initiating the rolling circle replication (RCR). Following cleavage, binds covalently to the 5'-phosphate of DNA as a tyrosyl ester. The cleavage gives rise to a free 3'-OH that serves as a primer for the cellular DNA polymerase. The polymerase synthesizes the (+) strand DNA by rolling circle mechanism. After one round of replication, a Rep-catalyzed nucleotidyl transfer reaction releases a circular single-stranded virus genome, thereby terminating the replication. Displays origin-specific DNA cleavage, nucleotidyl transferase, ATPase and helicase activities. This is Replication-associated protein from Solanum lycopersicum (Tomato).